Consider the following 249-residue polypeptide: Ribonuclease PH (249 aa).

Phosphate is bound by residues Arg-90 and 128-130 (GTR).

Belongs to the RNase PH family. As to quaternary structure, homohexameric ring arranged as a trimer of dimers.

The enzyme catalyses tRNA(n+1) + phosphate = tRNA(n) + a ribonucleoside 5'-diphosphate. In terms of biological role, phosphorolytic 3'-5' exoribonuclease that plays an important role in tRNA 3'-end maturation. Removes nucleotide residues following the 3'-CCA terminus of tRNAs; can also add nucleotides to the ends of RNA molecules by using nucleoside diphosphates as substrates, but this may not be physiologically important. Probably plays a role in initiation of 16S rRNA degradation (leading to ribosome degradation) during starvation. The chain is Ribonuclease PH from Parasynechococcus marenigrum (strain WH8102).